The following is a 60-amino-acid chain: MKNTILILFTAFIALLGFFGMSAEALADPKADPLAGPNPDADPEAINLKAIAALVKKLLG.

An N-terminal signal peptide occupies residues 1-27 (MKNTILILFTAFIALLGFFGMSAEALA). AXPX repeat units lie at residues 27–30 (ADPK), 31–34 (ADPL), 35–38 (AGPN), and 41–44 (ADPE). Positions 28 to 45 (DPKADPLAGPNPDADPEA) are excised as a propeptide. Leucine amide is present on leucine 59.

This sequence belongs to the MCD family. Mastoparan subfamily. Expressed by the venom gland.

It localises to the secreted. The synthetic peptide shows antimicrobial activities against Gram-negative bacteria (but not against all strains tested), Gram-positive bacteria (all strains tested) and the fungi C.albicans and C.parapsilosis. Exhibits little hemolytic activity against washed human erythrocytes. This is Mastoparan-VT6 from Vespa tropica (Greater banded hornet).